Here is a 552-residue protein sequence, read N- to C-terminus: 5'-AMP-activated protein kinase catalytic subunit alpha-2 (552 aa).

Residues 16-268 enclose the Protein kinase domain; that stretch reads YVLGDTLGVG…IKDIREHEWF (253 aa). ATP-binding positions include 22 to 30 and Lys-45; that span reads LGVGTFGKV. The active-site Proton acceptor is the Asp-139. Thr-172 bears the Phosphothreonine; by LKB1 and CaMKK2 mark. Thr-258 is modified (phosphothreonine). The interval 291–376 is AIS; it reads EAVKEVCEKF…PERMPPLIAD (86 aa). Phosphoserine is present on residues Ser-377 and Ser-491.

It belongs to the protein kinase superfamily. CAMK Ser/Thr protein kinase family. SNF1 subfamily. In terms of assembly, AMPK is a heterotrimer of an alpha catalytic subunit (PRKAA1 or PRKAA2), a beta (PRKAB1 or PRKAB2) and a gamma non-catalytic subunits (PRKAG1, PRKAG2 or PRKAG3). Interacts with FNIP1 and FNIP2. Interacts with DUSP29. Interacts with ARF6. The phosphorylated form at Thr-172 mediated by CamKK2 interacts with ACSS2. The cofactor is Mg(2+). Post-translationally, ubiquitinated. Phosphorylated at Thr-172 by STK11/LKB1 in complex with STE20-related adapter-alpha (STRADA) pseudo kinase and CAB39. Also phosphorylated at Thr-172 by CAMKK2; triggered by a rise in intracellular calcium ions, without detectable changes in the AMP/ATP ratio. CAMKK1 can also phosphorylate Thr-172, but at much lower level. Dephosphorylated by protein phosphatase 2A and 2C (PP2A and PP2C). Phosphorylated by ULK1; leading to negatively regulate AMPK activity and suggesting the existence of a regulatory feedback loop between ULK1 and AMPK. Dephosphorylated by PPM1A and PPM1B at Thr-172 (mediated by STK11/LKB1).

It localises to the cytoplasm. The protein resides in the nucleus. The catalysed reaction is L-seryl-[protein] + ATP = O-phospho-L-seryl-[protein] + ADP + H(+). It carries out the reaction L-threonyl-[protein] + ATP = O-phospho-L-threonyl-[protein] + ADP + H(+). The enzyme catalyses L-seryl-[acetyl-CoA carboxylase] + ATP = O-phospho-L-seryl-[acetyl-CoA carboxylase] + ADP + H(+). It catalyses the reaction L-seryl-[3-hydroxy-3-methylglutaryl-coenzyme A reductase] + ATP = O-phospho-L-seryl-[3-hydroxy-3-methylglutaryl-coenzyme A reductase] + ADP + H(+). With respect to regulation, activated by phosphorylation on Thr-172. Binding of AMP to non-catalytic gamma subunit (PRKAG1, PRKAG2 or PRKAG3) results in allosteric activation, inducing phosphorylation on Thr-172. AMP-binding to gamma subunit also sustains activity by preventing dephosphorylation of Thr-172. ADP also stimulates Thr-172 phosphorylation, without stimulating already phosphorylated AMPK. ATP promotes dephosphorylation of Thr-172, rendering the enzyme inactive. Under physiological conditions AMPK mainly exists in its inactive form in complex with ATP, which is much more abundant than AMP. Selectively inhibited by compound C (6-[4-(2-Piperidin-1-yl-ethoxy)-phenyl)]-3-pyridin-4-yl-pyyrazolo[1,5-a] pyrimidine. Activated by resveratrol, a natural polyphenol present in red wine, and S17834, a synthetic polyphenol. Salicylate/aspirin directly activates kinase activity, primarily by inhibiting Thr-172 dephosphorylation. Its function is as follows. Catalytic subunit of AMP-activated protein kinase (AMPK), an energy sensor protein kinase that plays a key role in regulating cellular energy metabolism. In response to reduction of intracellular ATP levels, AMPK activates energy-producing pathways and inhibits energy-consuming processes: inhibits protein, carbohydrate and lipid biosynthesis, as well as cell growth and proliferation. AMPK acts via direct phosphorylation of metabolic enzymes, and by longer-term effects via phosphorylation of transcription regulators. Regulates lipid synthesis by phosphorylating and inactivating lipid metabolic enzymes such as ACACA, ACACB, GYS1, HMGCR and LIPE; regulates fatty acid and cholesterol synthesis by phosphorylating acetyl-CoA carboxylase (ACACA and ACACB) and hormone-sensitive lipase (LIPE) enzymes, respectively. Promotes lipolysis of lipid droplets by mediating phosphorylation of isoform 1 of CHKA (CHKalpha2). Regulates insulin-signaling and glycolysis by phosphorylating IRS1, PFKFB2 and PFKFB3. Involved in insulin receptor/INSR internalization. AMPK stimulates glucose uptake in muscle by increasing the translocation of the glucose transporter SLC2A4/GLUT4 to the plasma membrane, possibly by mediating phosphorylation of TBC1D4/AS160. Regulates transcription and chromatin structure by phosphorylating transcription regulators involved in energy metabolism such as CRTC2/TORC2, FOXO3, histone H2B, HDAC5, MEF2C, MLXIPL/ChREBP, EP300, HNF4A, p53/TP53, SREBF1, SREBF2 and PPARGC1A. Acts as a key regulator of glucose homeostasis in liver by phosphorylating CRTC2/TORC2, leading to CRTC2/TORC2 sequestration in the cytoplasm. In response to stress, phosphorylates 'Ser-36' of histone H2B (H2BS36ph), leading to promote transcription. Acts as a key regulator of cell growth and proliferation by phosphorylating FNIP1, TSC2, RPTOR, WDR24 and ATG1/ULK1: in response to nutrient limitation, negatively regulates the mTORC1 complex by phosphorylating RPTOR component of the mTORC1 complex and by phosphorylating and activating TSC2. Also phosphorylates and inhibits GATOR2 subunit WDR24 in response to nutrient limitation, leading to suppress glucose-mediated mTORC1 activation. In response to energetic stress, phosphorylates FNIP1, inactivating the non-canonical mTORC1 signaling, thereby promoting nuclear translocation of TFEB and TFE3, and inducing transcription of lysosomal or autophagy genes. In response to nutrient limitation, promotes autophagy by phosphorylating and activating ATG1/ULK1. In that process, it also activates WDR45/WIPI4. Phosphorylates CASP6, thereby preventing its autoprocessing and subsequent activation. AMPK also acts as a regulator of circadian rhythm by mediating phosphorylation of CRY1, leading to destabilize it. May regulate the Wnt signaling pathway by phosphorylating CTNNB1, leading to stabilize it. Also acts as a regulator of cellular polarity by remodeling the actin cytoskeleton; probably by indirectly activating myosin. Also phosphorylates CFTR, EEF2K, KLC1, NOS3 and SLC12A1. Plays an important role in the differential regulation of pro-autophagy (composed of PIK3C3, BECN1, PIK3R4 and UVRAG or ATG14) and non-autophagy (composed of PIK3C3, BECN1 and PIK3R4) complexes, in response to glucose starvation. Can inhibit the non-autophagy complex by phosphorylating PIK3C3 and can activate the pro-autophagy complex by phosphorylating BECN1. Upon glucose starvation, promotes ARF6 activation in a kinase-independent manner leading to cell migration. Upon glucose deprivation mediates the phosphorylation of ACSS2 at 'Ser-659', which exposes the nuclear localization signal of ACSS2, required for its interaction with KPNA1 and nuclear translocation. Upon stress, regulates mitochondrial fragmentation through phosphorylation of MTFR1L. This is 5'-AMP-activated protein kinase catalytic subunit alpha-2 from Mus musculus (Mouse).